A 215-amino-acid polypeptide reads, in one-letter code: Protein NETWORKED 3B (215 aa).

The 86-residue stretch at 5–90 (SKWWWIGANH…QKHDLLIKTS (86 aa)) folds into the NAB domain. Residues 134 to 165 (DETMKEELEILREENRVYKEKKEVVTRLLANL) adopt a coiled-coil conformation.

It belongs to the NET family. Interacts with F-actin.

In terms of biological role, plant-specific actin binding protein. May be part of a membrane-cytoskeletal adapter complex. The chain is Protein NETWORKED 3B from Arabidopsis thaliana (Mouse-ear cress).